We begin with the raw amino-acid sequence, 264 residues long: Putative hydroxypyruvate isomerase (264 aa).

Catalysis depends on proton donor/acceptor residues Glu145 and Glu243.

This sequence belongs to the hyi family.

It catalyses the reaction 3-hydroxypyruvate = 2-hydroxy-3-oxopropanoate. Its function is as follows. Catalyzes the reversible isomerization between hydroxypyruvate and 2-hydroxy-3-oxopropanoate (also termed tartronate semialdehyde). This Drosophila melanogaster (Fruit fly) protein is Putative hydroxypyruvate isomerase (Gip).